The sequence spans 100 residues: NADH-quinone oxidoreductase subunit K (100 aa).

A run of 3 helical transmembrane segments spans residues 4 to 24 (LQHG…GLVI), 28 to 48 (LLFM…AFVV), and 60 to 80 (VMYI…LALL).

Belongs to the complex I subunit 4L family. As to quaternary structure, NDH-1 is composed of 13 different subunits. Subunits NuoA, H, J, K, L, M, N constitute the membrane sector of the complex.

The protein resides in the cell inner membrane. The enzyme catalyses a quinone + NADH + 5 H(+)(in) = a quinol + NAD(+) + 4 H(+)(out). Its function is as follows. NDH-1 shuttles electrons from NADH, via FMN and iron-sulfur (Fe-S) centers, to quinones in the respiratory chain. The immediate electron acceptor for the enzyme in this species is believed to be ubiquinone. Couples the redox reaction to proton translocation (for every two electrons transferred, four hydrogen ions are translocated across the cytoplasmic membrane), and thus conserves the redox energy in a proton gradient. The sequence is that of NADH-quinone oxidoreductase subunit K from Shigella boydii serotype 18 (strain CDC 3083-94 / BS512).